We begin with the raw amino-acid sequence, 242 residues long: Type III pantothenate kinase (242 aa).

7–14 (DLGNSRFK) serves as a coordination point for ATP. Substrate-binding positions include tyrosine 91 and 98–101 (GVDR). Aspartate 100 serves as the catalytic Proton acceptor. ATP is bound at residue threonine 121. Threonine 171 lines the substrate pocket.

Belongs to the type III pantothenate kinase family. As to quaternary structure, homodimer. NH4(+) serves as cofactor. Requires K(+) as cofactor.

Its subcellular location is the cytoplasm. It carries out the reaction (R)-pantothenate + ATP = (R)-4'-phosphopantothenate + ADP + H(+). It functions in the pathway cofactor biosynthesis; coenzyme A biosynthesis; CoA from (R)-pantothenate: step 1/5. In terms of biological role, catalyzes the phosphorylation of pantothenate (Pan), the first step in CoA biosynthesis. The polypeptide is Type III pantothenate kinase (Xanthomonas campestris pv. campestris (strain 8004)).